We begin with the raw amino-acid sequence, 433 residues long: Casein kinase 1-like protein 5 (433 aa).

The 270-residue stretch at 9 to 278 folds into the Protein kinase domain; sequence FRLGRKIGSG…LKRLFRNLFI (270 aa). Residues 15–23 and Lys38 contribute to the ATP site; that span reads IGSGSFGEI. Asp128 acts as the Proton acceptor in catalysis. Positions 297–433 are disordered; it reads QSQSGNPQPR…DDVEPQSKAL (137 aa). Basic and acidic residues predominate over residues 342–359; it reads LKQKDKNGNDSAIAKDKL. Residues 362–375 show a composition bias toward low complexity; the sequence is GSLNLGRSEGSSSR. The residue at position 390 (Ser390) is a Phosphoserine. Residues 407 to 423 show a composition bias toward polar residues; it reads INNNAGDETAATPQSNG.

The protein belongs to the protein kinase superfamily. CK1 Ser/Thr protein kinase family. Casein kinase I subfamily. As to quaternary structure, monomer. Autophosphorylated.

It is found in the cytoplasm. It carries out the reaction L-seryl-[protein] + ATP = O-phospho-L-seryl-[protein] + ADP + H(+). It catalyses the reaction L-threonyl-[protein] + ATP = O-phospho-L-threonyl-[protein] + ADP + H(+). Its function is as follows. Casein kinases are operationally defined by their preferential utilization of acidic proteins such as caseins as substrates. It can phosphorylate a large number of proteins. This chain is Casein kinase 1-like protein 5, found in Arabidopsis thaliana (Mouse-ear cress).